A 366-amino-acid chain; its full sequence is MLKKRYLVLEDGSYYEGYPIGSDQLTLGEIVFNTAMTGYQETISDPSYTGQIITFTYPLIGNYGINRDDFEALVPTLNGVVVKEASRQPSNFRKQKTFHEVLQEYDIPGISGVDTRSITRKIRNNGVLKAGFTDEKSEIDSMIAKLQSVELPRNEVTTVSTKSPYVSTGYGLSVVLVDFGKKQNIVRELNARGCNVTVVPYDTSAEAIIRMSPDGVMLSNGPGDPEEVHVAVEMIKGILGKIPFFGICLGHQLFALSQGATSFKMKFGHRGANHPVKDLKTGKIALTSQNHGYAIDKASLKNTDLEVTHIAINDDTVEGLRHKSLPAFSVQYHPEACPGPSDSNYLFDEFIDMINEYKTKELTNNA.

The interval 1–170 (MLKKRYLVLE…TKSPYVSTGY (170 aa)) is CPSase. Residues Ser47, Gly221, and Gly223 each coordinate L-glutamine. Residues 173-360 (SVVLVDFGKK…IDMINEYKTK (188 aa)) enclose the Glutamine amidotransferase type-1 domain. The active-site Nucleophile is the Cys248. L-glutamine-binding residues include Leu249, Gln252, Asn290, Gly292, and Tyr293. Catalysis depends on residues His333 and Glu335.

Belongs to the CarA family. As to quaternary structure, composed of two chains; the small (or glutamine) chain promotes the hydrolysis of glutamine to ammonia, which is used by the large (or ammonia) chain to synthesize carbamoyl phosphate. Tetramer of heterodimers (alpha,beta)4.

It carries out the reaction hydrogencarbonate + L-glutamine + 2 ATP + H2O = carbamoyl phosphate + L-glutamate + 2 ADP + phosphate + 2 H(+). It catalyses the reaction L-glutamine + H2O = L-glutamate + NH4(+). It participates in amino-acid biosynthesis; L-arginine biosynthesis; carbamoyl phosphate from bicarbonate: step 1/1. Its pathway is pyrimidine metabolism; UMP biosynthesis via de novo pathway; (S)-dihydroorotate from bicarbonate: step 1/3. In terms of biological role, small subunit of the glutamine-dependent carbamoyl phosphate synthetase (CPSase). CPSase catalyzes the formation of carbamoyl phosphate from the ammonia moiety of glutamine, carbonate, and phosphate donated by ATP, constituting the first step of 2 biosynthetic pathways, one leading to arginine and/or urea and the other to pyrimidine nucleotides. The small subunit (glutamine amidotransferase) binds and cleaves glutamine to supply the large subunit with the substrate ammonia. In Staphylococcus saprophyticus subsp. saprophyticus (strain ATCC 15305 / DSM 20229 / NCIMB 8711 / NCTC 7292 / S-41), this protein is Carbamoyl phosphate synthase small chain.